Consider the following 396-residue polypeptide: Elongation factor Tu (396 aa).

A tr-type G domain is found at 10-206 (KPHVNIGTIG…AVDESVPDPV (197 aa)). The tract at residues 19-26 (GHVDHGKT) is G1. 19–26 (GHVDHGKT) serves as a coordination point for GTP. Thr26 is a Mg(2+) binding site. Residues 62–66 (GITIN) are G2. A G3 region spans residues 83 to 86 (DAPG). GTP-binding positions include 83-87 (DAPGH) and 138-141 (NKSD). The G4 stretch occupies residues 138–141 (NKSD). Residues 176-178 (SGL) are G5.

This sequence belongs to the TRAFAC class translation factor GTPase superfamily. Classic translation factor GTPase family. EF-Tu/EF-1A subfamily. In terms of assembly, monomer.

The protein localises to the cytoplasm. The catalysed reaction is GTP + H2O = GDP + phosphate + H(+). Functionally, GTP hydrolase that promotes the GTP-dependent binding of aminoacyl-tRNA to the A-site of ribosomes during protein biosynthesis. This chain is Elongation factor Tu, found in Paenarthrobacter aurescens (strain TC1).